The primary structure comprises 130 residues: Small ribosomal subunit protein uS8 (130 aa).

This sequence belongs to the universal ribosomal protein uS8 family. Part of the 30S ribosomal subunit.

Functionally, one of the primary rRNA binding proteins, it binds directly to 16S rRNA central domain where it helps coordinate assembly of the platform of the 30S subunit. This Methanosphaera stadtmanae (strain ATCC 43021 / DSM 3091 / JCM 11832 / MCB-3) protein is Small ribosomal subunit protein uS8.